Consider the following 543-residue polypeptide: MDQSSGKGSGRDVGVAPVVLTILDGWGHRNDSEHNAIRQGDTPVMEALWHAYPHALIQASGSHVGLPDHQMGNSEVGHLTIGAGRIIRQELVRISDTVRDDQLNNTPALVELAEHLQNDTGTLHLLGLCSDGGVHSHVNHLCGLIHWAAAAGIKKVAVHAITDGRDTPTQSAMGSITLVQRAMEEAGVGHLASLCGRYWAMDRDKRWDRTEKAYDLYTDPTRSISDQSPQQLLAESYAAGITDEFLKPVRLSDDVMQDGDSVLVFNFRPDRARQIVQTLCLDDFDGFERRTTPKLDVVTFTQVEQDLPVSVAFPPEPLDDLLGQVVAEAGLRQYRTAETEKYPHVTYFMNGGIEQPLPGEERHLVPSPRVATYDLSPAMSADQLTDSCIDAIDQGTYSLIVINYANPDMVGHTGVMDAATEAIATVDRCIGRLLDAVGRRGGTMLITADHGNAELMQGPDGQAWTAHTTNPVPCILVEGEQRKLPGHGNDISLREDGGLADIAPTLLQILNLEQPAAMTGRSLIEPVSNVDPSPLSARLPLPV.

Residues aspartate 24 and serine 74 each contribute to the Mn(2+) site. The active-site Phosphoserine intermediate is the serine 74. Residues histidine 135, arginine 165–aspartate 166, arginine 197, arginine 203, arginine 268–arginine 271, and lysine 341 each bind substrate. Positions 408, 412, 449, 450, and 467 each coordinate Mn(2+).

It belongs to the BPG-independent phosphoglycerate mutase family. Monomer. It depends on Mn(2+) as a cofactor.

The catalysed reaction is (2R)-2-phosphoglycerate = (2R)-3-phosphoglycerate. It functions in the pathway carbohydrate degradation; glycolysis; pyruvate from D-glyceraldehyde 3-phosphate: step 3/5. Its function is as follows. Catalyzes the interconversion of 2-phosphoglycerate and 3-phosphoglycerate. The polypeptide is 2,3-bisphosphoglycerate-independent phosphoglycerate mutase (Parasynechococcus marenigrum (strain WH8102)).